A 152-amino-acid polypeptide reads, in one-letter code: MSLKIRLARGGAKKRPYYRIVVADSRSPRDGRFIEKIGSYNPMLPKDGQRVELDMEKVKAWIAKGAKPTDRVGRFIHQIEADAWKWEASNNPQKAEPGQKAKELAAEKAEKEADRKAAEEEAKAAAAAPAAEEAPAEEAPAAEAAAEEEKSE.

The interval 84-152 (WKWEASNNPQ…EAAAEEEKSE (69 aa)) is disordered. Positions 97–123 (PGQKAKELAAEKAEKEADRKAAEEEAK) are enriched in basic and acidic residues. Residues 124 to 144 (AAAAAPAAEEAPAEEAPAAEA) show a composition bias toward low complexity.

Belongs to the bacterial ribosomal protein bS16 family.

The protein is Small ribosomal subunit protein bS16 of Maricaulis maris (strain MCS10) (Caulobacter maris).